Consider the following 314-residue polypeptide: Hydroxyethylthiazole kinase (314 aa).

Positions 1–13 are enriched in low complexity; sequence MSNSASSFADVSS. Residues 1–24 form a disordered region; sequence MSNSASSFADVSSGCTAGTPVPAD. M70 is a substrate binding site. R145 and S217 together coordinate ATP. G244 lines the substrate pocket.

Belongs to the Thz kinase family. The cofactor is Mg(2+).

The catalysed reaction is 5-(2-hydroxyethyl)-4-methylthiazole + ATP = 4-methyl-5-(2-phosphooxyethyl)-thiazole + ADP + H(+). The protein operates within cofactor biosynthesis; thiamine diphosphate biosynthesis; 4-methyl-5-(2-phosphoethyl)-thiazole from 5-(2-hydroxyethyl)-4-methylthiazole: step 1/1. Catalyzes the phosphorylation of the hydroxyl group of 4-methyl-5-beta-hydroxyethylthiazole (THZ). The chain is Hydroxyethylthiazole kinase from Bifidobacterium longum subsp. infantis (strain ATCC 15697 / DSM 20088 / JCM 1222 / NCTC 11817 / S12).